Consider the following 167-residue polypeptide: NADH-ubiquinone oxidoreductase chain 6 (167 aa).

4 consecutive transmembrane segments (helical) span residues Pro-24–Ala-44, Leu-54–Leu-74, Val-85–Leu-105, and Trp-135–Ile-155.

This sequence belongs to the complex I subunit 6 family.

The protein localises to the mitochondrion membrane. The enzyme catalyses a ubiquinone + NADH + 5 H(+)(in) = a ubiquinol + NAD(+) + 4 H(+)(out). Functionally, core subunit of the mitochondrial membrane respiratory chain NADH dehydrogenase (Complex I) that is believed to belong to the minimal assembly required for catalysis. Complex I functions in the transfer of electrons from NADH to the respiratory chain. The immediate electron acceptor for the enzyme is believed to be ubiquinone. The chain is NADH-ubiquinone oxidoreductase chain 6 (MT-ND6) from Myxine glutinosa (Atlantic hagfish).